We begin with the raw amino-acid sequence, 694 residues long: 4-alpha-glucanotransferase (694 aa).

Belongs to the disproportionating enzyme family.

The protein resides in the cytoplasm. The enzyme catalyses Transfers a segment of a (1-&gt;4)-alpha-D-glucan to a new position in an acceptor, which may be glucose or a (1-&gt;4)-alpha-D-glucan.. This Escherichia coli (strain K12) protein is 4-alpha-glucanotransferase (malQ).